A 250-amino-acid chain; its full sequence is Pyrroloquinoline-quinone synthase (250 aa).

It belongs to the PqqC family.

It catalyses the reaction 6-(2-amino-2-carboxyethyl)-7,8-dioxo-1,2,3,4,7,8-hexahydroquinoline-2,4-dicarboxylate + 3 O2 = pyrroloquinoline quinone + 2 H2O2 + 2 H2O + H(+). The protein operates within cofactor biosynthesis; pyrroloquinoline quinone biosynthesis. In terms of biological role, ring cyclization and eight-electron oxidation of 3a-(2-amino-2-carboxyethyl)-4,5-dioxo-4,5,6,7,8,9-hexahydroquinoline-7,9-dicarboxylic-acid to PQQ. The chain is Pyrroloquinoline-quinone synthase from Xanthomonas oryzae pv. oryzae (strain MAFF 311018).